We begin with the raw amino-acid sequence, 442 residues long: C4-dicarboxylate transport protein (442 aa).

A run of 8 helical transmembrane segments spans residues 10-30 (VQVL…PSFG), 40-60 (FIKL…VSGI), 77-97 (LIYF…VANI), 149-169 (LLQV…LGTL), 185-205 (FVIL…AMAF), 221-241 (LMVA…GLIA), 288-308 (VVGL…SIYL), and 354-374 (AATL…ILGI). The interval 420–442 (PATPEVAAEERGEGRGLDGPLPA) is disordered.

This sequence belongs to the dicarboxylate/amino acid:cation symporter (DAACS) (TC 2.A.23) family.

It is found in the cell membrane. Responsible for the transport of dicarboxylates such as succinate, fumarate, and malate across the membrane. This Deinococcus geothermalis (strain DSM 11300 / CIP 105573 / AG-3a) protein is C4-dicarboxylate transport protein.